The primary structure comprises 447 residues: Phosphoglucosamine mutase (447 aa).

Residue Ser-104 is the Phosphoserine intermediate of the active site. Positions 104, 243, 245, and 247 each coordinate Mg(2+). Ser-104 is modified (phosphoserine).

Belongs to the phosphohexose mutase family. It depends on Mg(2+) as a cofactor. Activated by phosphorylation.

It carries out the reaction alpha-D-glucosamine 1-phosphate = D-glucosamine 6-phosphate. Its function is as follows. Catalyzes the conversion of glucosamine-6-phosphate to glucosamine-1-phosphate. This is Phosphoglucosamine mutase from Corynebacterium glutamicum (strain R).